We begin with the raw amino-acid sequence, 302 residues long: Dihydroorotate dehydrogenase B (NAD(+)), catalytic subunit (302 aa).

FMN contacts are provided by residues S20 and 44-45 (KG). Substrate contacts are provided by residues K44 and 68–72 (NSVGL). The FMN site is built by N98 and N125. N125 is a substrate binding site. C128 serves as the catalytic Nucleophile. Residues K163 and I189 each coordinate FMN. 190–191 (NT) contributes to the substrate binding site. FMN-binding positions include G215, 241–242 (GG), and 263–264 (GT).

This sequence belongs to the dihydroorotate dehydrogenase family. Type 1 subfamily. As to quaternary structure, heterotetramer of 2 PyrK and 2 PyrD type B subunits. It depends on FMN as a cofactor.

The protein localises to the cytoplasm. The enzyme catalyses (S)-dihydroorotate + NAD(+) = orotate + NADH + H(+). It participates in pyrimidine metabolism; UMP biosynthesis via de novo pathway; orotate from (S)-dihydroorotate (NAD(+) route): step 1/1. Functionally, catalyzes the conversion of dihydroorotate to orotate with NAD(+) as electron acceptor. The polypeptide is Dihydroorotate dehydrogenase B (NAD(+)), catalytic subunit (pyrD) (Thermoanaerobacter sp. (strain X514)).